The sequence spans 401 residues: MIVQDSVCSELMRGCEEILPVPELEKKLQKGIPLKIKAGFDPTAPDLHLGHTVLLNKLRQFQQFGHEVIFLIGDFTAMIGDPTGKNVTRMPLSQETVLENAKTYQHQVFKILDPDKTTVAFNSQWLNKFNAVDLIRLAATHTVARMLERDDFNKRYTTGQPIAIHEFLYPLLQGYDSVALKADVELGGTDQKFNLLMGRELQKHYGFEPQVVMMTPLIEGLDGVKKMSKSLDNYIGINETSEQMFGKIMSVSDELMWRYIDLLSFKTGKEIQQLKQSVLEGKNPRDVKIDFAKEIVARFHDQTQAEFAHNKFIERFQKGNIPEDLEELSLVIAEPIALAQLLKQIDLTASTSESIRMVKQGAVKVDGDKISDPSLKLPIGKSYIIQVGKRRIAKLSIQQAH.

The 'HIGH' region signature appears at 42–51 (PTAPDLHLGH). A 'KMSKS' region motif is present at residues 226 to 230 (KMSKS). Position 229 (Lys-229) interacts with ATP. The S4 RNA-binding domain occupies 336–397 (IALAQLLKQI…GKRRIAKLSI (62 aa)).

The protein belongs to the class-I aminoacyl-tRNA synthetase family. TyrS type 2 subfamily. As to quaternary structure, homodimer.

It localises to the cytoplasm. The enzyme catalyses tRNA(Tyr) + L-tyrosine + ATP = L-tyrosyl-tRNA(Tyr) + AMP + diphosphate + H(+). Catalyzes the attachment of tyrosine to tRNA(Tyr) in a two-step reaction: tyrosine is first activated by ATP to form Tyr-AMP and then transferred to the acceptor end of tRNA(Tyr). The sequence is that of Tyrosine--tRNA ligase from Legionella pneumophila (strain Lens).